The following is a 720-amino-acid chain: DNA ligase (720 aa).

Residues 60–64 (DYDYD), 109–110 (SL), and E140 each bind NAD(+). K142 (N6-AMP-lysine intermediate) is an active-site residue. Residues R163 and E201 each contribute to the NAD(+) site. The interval 220-239 (GLPPFANPRNAAAGSIRQKD) is disordered. NAD(+) is bound by residues K320 and K344. Zn(2+)-binding residues include C438, C441, C456, and C461. Positions 619-709 (KVADVLKGKT…VDLEKIKKED (91 aa)) constitute a BRCT domain.

The protein belongs to the NAD-dependent DNA ligase family. LigA subfamily. Mn(2+) is required as a cofactor. Requires Mg(2+) as cofactor.

It carries out the reaction NAD(+) + (deoxyribonucleotide)n-3'-hydroxyl + 5'-phospho-(deoxyribonucleotide)m = (deoxyribonucleotide)n+m + AMP + beta-nicotinamide D-nucleotide.. Its function is as follows. DNA ligase that catalyzes the formation of phosphodiester linkages between 5'-phosphoryl and 3'-hydroxyl groups in double-stranded DNA using NAD as a coenzyme and as the energy source for the reaction. It is essential for DNA replication and repair of damaged DNA. This is DNA ligase from Aquifex aeolicus (strain VF5).